Reading from the N-terminus, the 331-residue chain is Autoinducer 2 import system permease protein LsrD (331 aa).

The next 10 helical transmembrane spans lie at Y7 to S27, I45 to I65, F67 to P87, I90 to I110, L118 to I138, L162 to L182, T212 to V232, S240 to N260, I261 to L281, and I288 to V308.

Belongs to the binding-protein-dependent transport system permease family. AraH/RbsC subfamily. As to quaternary structure, the complex is composed of two ATP-binding proteins (LsrA), two transmembrane proteins (LsrC and LsrD) and a solute-binding protein (LsrB).

The protein localises to the cell inner membrane. In terms of biological role, part of the ABC transporter complex LsrABCD involved in autoinducer 2 (AI-2) import. Probably responsible for the translocation of the substrate across the membrane. This Yersinia enterocolitica serotype O:8 / biotype 1B (strain NCTC 13174 / 8081) protein is Autoinducer 2 import system permease protein LsrD (lsrD).